A 119-amino-acid polypeptide reads, in one-letter code: Holo-[acyl-carrier-protein] synthase (119 aa).

2 residues coordinate Mg(2+): D8 and E53.

This sequence belongs to the P-Pant transferase superfamily. AcpS family. Requires Mg(2+) as cofactor.

The protein resides in the cytoplasm. The enzyme catalyses apo-[ACP] + CoA = holo-[ACP] + adenosine 3',5'-bisphosphate + H(+). In terms of biological role, transfers the 4'-phosphopantetheine moiety from coenzyme A to a Ser of acyl-carrier-protein. This chain is Holo-[acyl-carrier-protein] synthase, found in Petrotoga mobilis (strain DSM 10674 / SJ95).